Consider the following 324-residue polypeptide: Aspartate carbamoyltransferase catalytic subunit (324 aa).

Positions 71 and 72 each coordinate carbamoyl phosphate. K99 provides a ligand contact to L-aspartate. Carbamoyl phosphate-binding residues include R121, H151, and Q154. L-aspartate is bound by residues R184 and R239. Carbamoyl phosphate contacts are provided by G280 and P281.

Belongs to the aspartate/ornithine carbamoyltransferase superfamily. ATCase family. In terms of assembly, heterododecamer (2C3:3R2) of six catalytic PyrB chains organized as two trimers (C3), and six regulatory PyrI chains organized as three dimers (R2).

It catalyses the reaction carbamoyl phosphate + L-aspartate = N-carbamoyl-L-aspartate + phosphate + H(+). The protein operates within pyrimidine metabolism; UMP biosynthesis via de novo pathway; (S)-dihydroorotate from bicarbonate: step 2/3. In terms of biological role, catalyzes the condensation of carbamoyl phosphate and aspartate to form carbamoyl aspartate and inorganic phosphate, the committed step in the de novo pyrimidine nucleotide biosynthesis pathway. The protein is Aspartate carbamoyltransferase catalytic subunit of Cupriavidus necator (strain ATCC 17699 / DSM 428 / KCTC 22496 / NCIMB 10442 / H16 / Stanier 337) (Ralstonia eutropha).